A 134-amino-acid chain; its full sequence is Acyl carrier protein, chloroplastic (134 aa).

The N-terminal 51 residues, Met-1–Cys-51, are a transit peptide targeting the chloroplast. The Carrier domain occupies Pro-55–Val-130. At Ser-90 the chain carries O-(pantetheine 4'-phosphoryl)serine.

It belongs to the acyl carrier protein (ACP) family. Post-translationally, 4'-phosphopantetheine is transferred from CoA to a specific serine of apo-ACP by acpS. This modification is essential for activity because fatty acids are bound in thioester linkage to the sulfhydryl of the prosthetic group. In terms of tissue distribution, seed.

The protein resides in the plastid. The protein localises to the chloroplast. It participates in lipid metabolism; fatty acid biosynthesis. In terms of biological role, carrier of the growing fatty acid chain in fatty acid biosynthesis. The sequence is that of Acyl carrier protein, chloroplastic (ACL1.A2) from Brassica napus (Rape).